A 156-amino-acid polypeptide reads, in one-letter code: Small ribosomal subunit protein uS7 (156 aa).

Belongs to the universal ribosomal protein uS7 family. As to quaternary structure, part of the 30S ribosomal subunit. Contacts proteins S9 and S11.

One of the primary rRNA binding proteins, it binds directly to 16S rRNA where it nucleates assembly of the head domain of the 30S subunit. Is located at the subunit interface close to the decoding center, probably blocks exit of the E-site tRNA. The chain is Small ribosomal subunit protein uS7 from Streptococcus uberis (strain ATCC BAA-854 / 0140J).